The chain runs to 215 residues: L-fuculose phosphate aldolase (215 aa).

Substrate contacts are provided by residues 28 to 29 (GN), 43 to 44 (TG), and 71 to 72 (SS). Catalysis depends on E73, which acts as the Proton donor/acceptor. Residues E73, H92, H94, and H155 each contribute to the Zn(2+) site.

This sequence belongs to the aldolase class II family. AraD/FucA subfamily. Homotetramer. Zn(2+) is required as a cofactor.

The catalysed reaction is L-fuculose 1-phosphate = (S)-lactaldehyde + dihydroxyacetone phosphate. It participates in carbohydrate degradation; L-fucose degradation; L-lactaldehyde and glycerone phosphate from L-fucose: step 3/3. Involved in the degradation of L-fucose and D-arabinose. Catalyzes the reversible cleavage of L-fuculose 1-phosphate (Fuc1P) to yield dihydroxyacetone phosphate (DHAP) and L-lactaldehyde. This Escherichia coli O6:H1 (strain CFT073 / ATCC 700928 / UPEC) protein is L-fuculose phosphate aldolase.